The following is an 809-amino-acid chain: Poly(A) polymerase (809 aa).

The segment at 1 to 50 is disordered; the sequence is MNKNGGPPVANITTSSTTITSTTTTQAKSQLPSSLSVNNLHTTQGSTDQP. The span at 12–25 shows a compositional bias: low complexity; sequence ITTSSTTITSTTTT. Residues 26–50 show a composition bias toward polar residues; it reads QAKSQLPSSLSVNNLHTTQGSTDQP. ATP is bound by residues 133–135, 146–148, Asp200, Lys262, Tyr271, and 280–281; these read FGS, DID, and GV. 3 residues coordinate Mg(2+): Asp146, Asp148, and Asp200. Disordered regions lie at residues 529–760 and 785–809; these read FVKD…QQIQ and ISSS…IRGN. Positions 530-540 are enriched in basic and acidic residues; it reads VKDEGPEEPVK. Residues 572–655 are compositionally biased toward low complexity; that stretch reads SPITTNINST…TPPTTTTINS (84 aa). The span at 656–665 shows a compositional bias: polar residues; it reads VQPPSAQPTE. The span at 666-706 shows a compositional bias: low complexity; the sequence is NGSSTSNSPTSTSINNTALPPNPTTNSESTIETTITLPTTL. Residues 707–735 are compositionally biased toward polar residues; the sequence is ESQTSTLKDSNEISTNGTAVATEPTITSP. Low complexity-rich tracts occupy residues 736-760 and 785-794; these read SVNI…QQIQ and ISSSSETSQS.

It belongs to the poly(A) polymerase family. Mg(2+) serves as cofactor. Mn(2+) is required as a cofactor.

It localises to the nucleus. It catalyses the reaction RNA(n) + ATP = RNA(n)-3'-adenine ribonucleotide + diphosphate. In terms of biological role, polymerase that creates the 3'-poly(A) tail of mRNA's. May acquire specificity through interaction with a cleavage and polyadenylation factor. The polypeptide is Poly(A) polymerase (papA) (Dictyostelium discoideum (Social amoeba)).